We begin with the raw amino-acid sequence, 274 residues long: MAHYFVGDVQGCFAELKRLLAEVDFNPSRDELWAVGDLVARGPDSLATLRYFQSLGDAGKTVLGNHDLHLLALHGKLKRDKPSDNLAPLLNAPDIASLIDWLRQQPLMRELPEHKVIMTHAGVPPQWSLDVLRQESQLVSQALKQSDYLEALISQMYSDTAERWDPSAIGLNRLRFCINALTRMRYLYVDGHLDFDCKQPPEDCSNPQLRPWFEFTSALRQSHTLVFGHWAALMGKVNDPKLKALDTGCCWGEYLTLWHLEKDQKITQKKLKKG.

It belongs to the Ap4A hydrolase family.

The enzyme catalyses P(1),P(4)-bis(5'-adenosyl) tetraphosphate + H2O = 2 ADP + 2 H(+). Its function is as follows. Hydrolyzes diadenosine 5',5'''-P1,P4-tetraphosphate to yield ADP. This chain is Bis(5'-nucleosyl)-tetraphosphatase, symmetrical, found in Shewanella sp. (strain MR-7).